A 582-amino-acid polypeptide reads, in one-letter code: Protein alan shepard (582 aa).

Over residues 1–12 the composition is skewed to pro residues; the sequence is MHPRYSPAPPPQ. Residues 1–73 are disordered; sequence MHPRYSPAPP…AAPPTSRSAF (73 aa). The residue at position 5 (tyrosine 5) is a Phosphotyrosine. The segment covering 13–24 has biased composition (low complexity); the sequence is QQQQMGGPPHQQ. Positions 25-35 are enriched in gly residues; that stretch reads QGGGGGGGGSM. Polar residues predominate over residues 37-57; the sequence is GPSNAQQLPPQIPRSQNYSNG. Over residues 58–72 the composition is skewed to low complexity; the sequence is SSSSAAAAPPTSRSA. Phosphotyrosine occurs at positions 125 and 142. The disordered stretch occupies residues 164–225; it reads PATTTYGQRV…TVQNQNQQGG (62 aa). A compositionally biased stretch (low complexity) spans 178–225; the sequence is SPSNTNSSSSSNTGSQSGTLSTSLSNTTNTNTNMGPNGTVQNQNQQGG. RRM domains follow at residues 231–304 and 310–389; these read TNLY…MAKQ and TNLY…FADG. The interval 555–582 is disordered; it reads PMTDSEQASTAASPDEAYTQYPHQAAPK.

In terms of biological role, has a role in the perception of gravity. This is Protein alan shepard from Drosophila erecta (Fruit fly).